We begin with the raw amino-acid sequence, 256 residues long: MSLEALQQRLGYRFSKPELLQQALTHRSHNAMHNERLEFLGDSILNCAVADMLYGMFGKLDEGDLSRVRANLVKQQALYEIAQMLLLPDELRLGEGELKSGGFRRPSILADALEAIFGAVFLDGGFDAARTLIRKLYIPILEQVDPRTLGKDAKTLLQEYLQGHKIALPQYAVVATHGAAHNQQFEVECTIPKLEIRVSGSGASRRAAEQSAAKLALEEAHRLVPQLVKRSRAERTGKTRKQATPPDPQLSLRLKE.

Positions 3 to 125 constitute an RNase III domain; sequence LEALQQRLGY…IFGAVFLDGG (123 aa). Residue Glu38 participates in Mg(2+) binding. Residue Asp42 is part of the active site. Asp111 and Glu114 together coordinate Mg(2+). The active site involves Glu114. In terms of domain architecture, DRBM spans 152-222; the sequence is DAKTLLQEYL…AKLALEEAHR (71 aa). A disordered region spans residues 227–256; sequence LVKRSRAERTGKTRKQATPPDPQLSLRLKE.

This sequence belongs to the ribonuclease III family. As to quaternary structure, homodimer. Mg(2+) serves as cofactor.

The protein localises to the cytoplasm. The enzyme catalyses Endonucleolytic cleavage to 5'-phosphomonoester.. Functionally, digests double-stranded RNA. Involved in the processing of primary rRNA transcript to yield the immediate precursors to the large and small rRNAs (23S and 16S). Processes some mRNAs, and tRNAs when they are encoded in the rRNA operon. Processes pre-crRNA and tracrRNA of type II CRISPR loci if present in the organism. This is Ribonuclease 3 from Ralstonia nicotianae (strain ATCC BAA-1114 / GMI1000) (Ralstonia solanacearum).